Consider the following 164-residue polypeptide: Large ribosomal subunit protein uL11 (164 aa).

It belongs to the universal ribosomal protein uL11 family. Part of the ribosomal stalk of the 50S ribosomal subunit. Interacts with L10 and the large rRNA to form the base of the stalk. L10 forms an elongated spine to which L12 dimers bind in a sequential fashion forming a multimeric L10(L12)X complex.

Forms part of the ribosomal stalk which helps the ribosome interact with GTP-bound translation factors. This chain is Large ribosomal subunit protein uL11, found in Pyrococcus furiosus (strain ATCC 43587 / DSM 3638 / JCM 8422 / Vc1).